The following is a 476-amino-acid chain: MHYFPVFADLNNRPVLVVGGGGVAARKVNLLLKANADVRIVAQKLNAELTALFELGHILWIAGEFNSEQIRNVFLVIAATDDEYLNERVFRVAESQQKLVNVVDDQARCSFIFPSIIDRNPIQVAVSSGGTAPVLARLLREKLEALLPQHLGAMADISGKWRHKVKTKLKTVTERRRFWESLFNGRFSQLLKNRQTEAAKKELELQLDKDYRGGFVSLVGAGPGDAGLLTLKGLQEIQQADVVLYDALVSDEILELVRRDAKLVFVGKRAQGKQVAQENTNALLVKYAQQGKRVVRLKGGDPFVFGRGGEELEVLAERQIPFSVVPGITAAIGATAYAGIPLTHRDYAQSAVFVTGHRKANASDIEWQTLARSNQTLVIYMGTLKAKDIAERLQQFGRAGSTPIAVISQGTQARQKTHIGTLTALAEIAENAPTPALIVVGEVVTLHDKLAWFGEQKFAQKRPHFTLDSLRIESVA.

The segment at 1-203 is precorrin-2 dehydrogenase /sirohydrochlorin ferrochelatase; that stretch reads MHYFPVFADL…RQTEAAKKEL (203 aa). NAD(+)-binding positions include 22-23 and 43-44; these read GV and QK. Phosphoserine is present on S128. Residues 214-476 are uroporphyrinogen-III C-methyltransferase; the sequence is GFVSLVGAGP…LDSLRIESVA (263 aa). P223 is an S-adenosyl-L-methionine binding site. D246 (proton acceptor) is an active-site residue. The active-site Proton donor is K268. Residues 299–301, V304, 329–330, M381, and G410 each bind S-adenosyl-L-methionine; these read GGD and TA.

In the N-terminal section; belongs to the precorrin-2 dehydrogenase / sirohydrochlorin ferrochelatase family. This sequence in the C-terminal section; belongs to the precorrin methyltransferase family.

It catalyses the reaction uroporphyrinogen III + 2 S-adenosyl-L-methionine = precorrin-2 + 2 S-adenosyl-L-homocysteine + H(+). The enzyme catalyses precorrin-2 + NAD(+) = sirohydrochlorin + NADH + 2 H(+). It carries out the reaction siroheme + 2 H(+) = sirohydrochlorin + Fe(2+). Its pathway is cofactor biosynthesis; adenosylcobalamin biosynthesis; precorrin-2 from uroporphyrinogen III: step 1/1. It functions in the pathway cofactor biosynthesis; adenosylcobalamin biosynthesis; sirohydrochlorin from precorrin-2: step 1/1. The protein operates within porphyrin-containing compound metabolism; siroheme biosynthesis; precorrin-2 from uroporphyrinogen III: step 1/1. It participates in porphyrin-containing compound metabolism; siroheme biosynthesis; siroheme from sirohydrochlorin: step 1/1. Its pathway is porphyrin-containing compound metabolism; siroheme biosynthesis; sirohydrochlorin from precorrin-2: step 1/1. In terms of biological role, multifunctional enzyme that catalyzes the SAM-dependent methylations of uroporphyrinogen III at position C-2 and C-7 to form precorrin-2 via precorrin-1. Then it catalyzes the NAD-dependent ring dehydrogenation of precorrin-2 to yield sirohydrochlorin. Finally, it catalyzes the ferrochelation of sirohydrochlorin to yield siroheme. The chain is Siroheme synthase from Actinobacillus succinogenes (strain ATCC 55618 / DSM 22257 / CCUG 43843 / 130Z).